The chain runs to 704 residues: MARQVALDRVRNIGIMAHIDAGKTTTTERILYYTGRLHKMGEVHEGGATMDWMEQEKERGITITSAATTCFWTPKYGNYAGLNHRINIIDTPGHVDFTVEVERSLRVLDGAVALFCAVGGVEPQSETVWRQANKYGVPRIAYVNKMDRVGANFFETVKAIRERLGANPVPIQIPIGQGEVFAGFVDLIRMKGIIYDKEDGSTYTEVEIPHDLENEARTWRINMLEAVSELDETLLEKYLNGEDITEEEIRTVLRQATLGVTIVPVLCGSSFKNKGVQFMLDAVIDYLASPVDDGEVEGHDPKTEEPIVRQPKDEEPFAALAFKIATDPFVGKLTFFRVYSGVLNAGSYVLNSTTGKKERVGRVLQMHSNKREERDAVYAGDIAAAVGLKDVRTGDTLCDESKPIVLEKMVFPEPVIEIAVEPKTKADNDKLGMSLAKLAEEDPTFRVKTDEETGQTLIAGMGELHLEILVDRLKREFKVEANVGQPQVAYRETIRGTVEYEGKFVRQSGGKGQFGLVVLRVEPLEEGKGYEFVDEIKGGVIPKEYIPAVNAGIQEAMKDGVVAGFPMQDIKVTLIDGKYHEVDSSEMAFKIAGSIGFKGAAKKANPVLLEPIMKVEVITPEEYLGDVMGDLSGRRGHIEGMGQRAGAQFVSAKVPLSQMFGYSTDLRSMTQGRANYSMEFESYREVPRNIAEALQEKRVGKDSE.

In terms of domain architecture, tr-type G spans 8-291 (DRVRNIGIMA…AVIDYLASPV (284 aa)). GTP-binding positions include 17–24 (AHIDAGKT), 90–94 (DTPGH), and 144–147 (NKMD).

It belongs to the TRAFAC class translation factor GTPase superfamily. Classic translation factor GTPase family. EF-G/EF-2 subfamily.

The protein localises to the cytoplasm. Its function is as follows. Catalyzes the GTP-dependent ribosomal translocation step during translation elongation. During this step, the ribosome changes from the pre-translocational (PRE) to the post-translocational (POST) state as the newly formed A-site-bound peptidyl-tRNA and P-site-bound deacylated tRNA move to the P and E sites, respectively. Catalyzes the coordinated movement of the two tRNA molecules, the mRNA and conformational changes in the ribosome. The polypeptide is Elongation factor G (Chlorobaculum tepidum (strain ATCC 49652 / DSM 12025 / NBRC 103806 / TLS) (Chlorobium tepidum)).